Here is a 180-residue protein sequence, read N- to C-terminus: Negative modulator of initiation of replication (180 aa).

Residues 87–88 are interaction with DNA; the sequence is AV.

The protein belongs to the SeqA family. As to quaternary structure, homodimer. Polymerizes to form helical filaments.

The protein resides in the cytoplasm. Functionally, negative regulator of replication initiation, which contributes to regulation of DNA replication and ensures that replication initiation occurs exactly once per chromosome per cell cycle. Binds to pairs of hemimethylated GATC sequences in the oriC region, thus preventing assembly of replication proteins and re-initiation at newly replicated origins. Repression is relieved when the region becomes fully methylated. In Ferrimonas balearica (strain DSM 9799 / CCM 4581 / KCTC 23876 / PAT), this protein is Negative modulator of initiation of replication.